The primary structure comprises 303 residues: Acetylglutamate kinase (303 aa).

Substrate is bound by residues 75-76 (GG), Arg97, and Asn194.

Belongs to the acetylglutamate kinase family. ArgB subfamily.

The protein localises to the cytoplasm. The enzyme catalyses N-acetyl-L-glutamate + ATP = N-acetyl-L-glutamyl 5-phosphate + ADP. Its pathway is amino-acid biosynthesis; L-arginine biosynthesis; N(2)-acetyl-L-ornithine from L-glutamate: step 2/4. Functionally, catalyzes the ATP-dependent phosphorylation of N-acetyl-L-glutamate. The protein is Acetylglutamate kinase of Gloeobacter violaceus (strain ATCC 29082 / PCC 7421).